Here is a 270-residue protein sequence, read N- to C-terminus: Protein-ADP-ribose hydrolase (270 aa).

In terms of domain architecture, Macro spans 73–267; it reads VSVKDCQKTN…LYDTYLQKEN (195 aa). ADP-D-ribose-binding residues include aspartate 92, isoleucine 93, and asparagine 106. Residues cysteine 112, histidine 117, and cysteine 119 each coordinate Zn(2+). ADP-D-ribose contacts are provided by cysteine 119, isoleucine 120, aspartate 121, serine 212, threonine 213, glycine 214, glutamate 215, and phenylalanine 216.

Belongs to the MacroD-type family. Zn-Macro subfamily. Zn(2+) serves as cofactor.

It catalyses the reaction 4-O-(ADP-D-ribosyl)-L-aspartyl-[protein] + H2O = L-aspartyl-[protein] + ADP-D-ribose + H(+). ADP-ribosylhydrolase that specifically reverses the SirTM-mediated mono-ADP-ribosylation at an asparatate residue of GcvH-L, by releasing ADP-ribose from the target protein. May play a role in the regulation of the response to host-induced oxidative stress. This chain is Protein-ADP-ribose hydrolase, found in Streptococcus pyogenes serotype M18 (strain MGAS8232).